We begin with the raw amino-acid sequence, 1031 residues long: Translation initiation factor IF-2 (1031 aa).

2 disordered regions span residues 33 to 369 (KSHS…GDVL) and 388 to 436 (LKPL…AESL). A compositionally biased stretch (basic and acidic residues) spans 45–56 (ELVRSKLSEPRV). Residues 96 to 105 (PAPAQQQAAA) show a composition bias toward low complexity. The segment covering 108 to 123 (ASSSKPSPQRPDQLSS) has biased composition (polar residues). Low complexity predominate over residues 148–171 (PAAQEPQPAAASTRPEAAAKAGSP). The span at 184 to 200 (VLPPPRRAASGPEPPQR) shows a compositional bias: pro residues. The span at 250 to 281 (TRPEPRSPVAKKEESSDSGKADEAPRPQRRLE) shows a compositional bias: basic and acidic residues. Residues 286-299 (PTRPVAKPLPPEPD) are compositionally biased toward pro residues. Low complexity predominate over residues 419–435 (RPSASAEATAPEAAAES). The 174-residue stretch at 522–695 (PRPPVVTIMG…LLVADVAELQ (174 aa)) folds into the tr-type G domain. Residues 531 to 538 (GHVDHGKT) are G1. Position 531–538 (531–538 (GHVDHGKT)) interacts with GTP. Residues 556–560 (GITQR) form a G2 region. A G3 region spans residues 581 to 584 (DTPG). GTP is bound by residues 581–585 (DTPGH) and 635–638 (NKID). Residues 635–638 (NKID) are G4. Residues 671 to 673 (SAL) form a G5 region.

The protein belongs to the TRAFAC class translation factor GTPase superfamily. Classic translation factor GTPase family. IF-2 subfamily.

It is found in the cytoplasm. Functionally, one of the essential components for the initiation of protein synthesis. Protects formylmethionyl-tRNA from spontaneous hydrolysis and promotes its binding to the 30S ribosomal subunits. Also involved in the hydrolysis of GTP during the formation of the 70S ribosomal complex. The chain is Translation initiation factor IF-2 from Synechococcus sp. (strain JA-3-3Ab) (Cyanobacteria bacterium Yellowstone A-Prime).